Reading from the N-terminus, the 212-residue chain is Methylthioribulose-1-phosphate dehydratase (212 aa).

Zn(2+) is bound by residues histidine 97 and histidine 99.

This sequence belongs to the aldolase class II family. MtnB subfamily. As to quaternary structure, homotetramer. Requires Zn(2+) as cofactor.

It catalyses the reaction 5-(methylsulfanyl)-D-ribulose 1-phosphate = 5-methylsulfanyl-2,3-dioxopentyl phosphate + H2O. The protein operates within amino-acid biosynthesis; L-methionine biosynthesis via salvage pathway; L-methionine from S-methyl-5-thio-alpha-D-ribose 1-phosphate: step 2/6. Functionally, catalyzes the dehydration of methylthioribulose-1-phosphate (MTRu-1-P) into 2,3-diketo-5-methylthiopentyl-1-phosphate (DK-MTP-1-P). This chain is Methylthioribulose-1-phosphate dehydratase, found in Bacillus cereus (strain AH187).